Here is a 508-residue protein sequence, read N- to C-terminus: MAADWLGSIVSINCGDSLGVYQGRVSAVDQVSQTISLTRPFHNGVKCLVPEVTFRAGDITELKILEIPGPGGNQHFGDVHQTELGPSGVGCQVGISQNGTGKLVKKPTSSSSAPQNIPKRTDVKSQDVAVSPQQQQCSKSYVDRHMESLSQSKSFRRRHNSWSSSSRHPNQATPKKSGLKNGQMKNKDDECFGDDIEEIPDTDFDFEGNLALFDKAAVFEEIGTYERRSGTRSRGIPNERPTRYRHDENILESEPIVYRRITVPHNVSKEFCTDSGLVVPSVSYEQHKKLLSVAEKHGLTLERRLEMTGVCASQMALTLLGGPNRLNPKNVHQRPTVALLCGPHVKGAQGISCGRHLANHDVQVILFLPNFVKMLESITNELSLFSKTQGQQVSSLKDLPTSPVDLVINCLDCPENVFLRDQPWYKAAVAWANQNRAPVLSIDPPVHEVEQGIDAKWSLALGLPLPLGEHAGRIYLCDIGIPQQVFQEVGINYHSPFGCKFVIPLHSA.

The Sm domain occupies 1–68 (MAADWLGSIV…ITELKILEIP (68 aa)). The segment at 1 to 79 (MAADWLGSIV…PGGNQHFGDV (79 aa)) is required for P-body targeting and interaction with DCP1A. Residues 95–192 (ISQNGTGKLV…QMKNKDDECF (98 aa)) are disordered. Phosphoserine occurs at positions 131, 138, 140, and 161. The segment at 191–296 (CFGDDIEEIP…HKKLLSVAEK (106 aa)) is required for interaction with DDX6. In terms of domain architecture, DFDF spans 192–228 (FGDDIEEIPDTDFDFEGNLALFDKAAVFEEIGTYERR). Residues 283-487 (SYEQHKKLLS…DIGIPQQVFQ (205 aa)) enclose the YjeF N-terminal domain.

This sequence belongs to the EDC3 family. In terms of assembly, homodimer (via YjeF N-terminal domain). Forms a complex with DCP1A, DCP2, DDX6 and EDC4/HEDLS, within this complex directly interacts with DCP1A and DDX6. Interacts with ZFP36.

It localises to the cytoplasm. It is found in the P-body. Functionally, binds single-stranded RNA. Involved in the process of mRNA degradation and in the positive regulation of mRNA decapping. The chain is Enhancer of mRNA-decapping protein 3 (EDC3) from Macaca fascicularis (Crab-eating macaque).